Consider the following 351-residue polypeptide: Centromere-binding protein 1 (351 aa).

M1 is modified (N-acetylmethionine). Composition is skewed to polar residues over residues 1–10 (MNSLANNNKL), 43–52 (LLSQESNDGN), and 65–77 (KGTQSQYESGLTS). 3 disordered regions span residues 1–164 (MNSL…TQQS), 196–233 (KKDISMQPGRRGRKPTTLATTDEWKKQRKDSHKEVERR), and 327–351 (YEDMHTHKKQENERKSTRSDNPHEA). The residue at position 45 (S45) is a Phosphoserine; by ATM or ATR. Phosphoserine is present on S48. S84 is modified (phosphoserine). Polar residues-rich tracts occupy residues 100-124 (VNYTDLIQGQEDSSDAHTSNQTNAN) and 138-164 (TPSNEGVKPNTSLEGMTSSPMESTQQS). A Phosphothreonine modification is found at T138. The 49-residue stretch at 222 to 270 (QRKDSHKEVERRRRENINTAINVLSDLLPVRESSKAAILACAAEYIQKL) folds into the bHLH domain.

As to quaternary structure, binds DNA as a dimer. Associates with MET4 to form a heteromeric complex which also includes MET28.

It is found in the nucleus. The protein localises to the mitochondrion. It localises to the chromosome. Its subcellular location is the centromere. In terms of biological role, required for chromosome stability and methionine prototrophy. It is involved in chromosomal segregation. Binds to a highly conserved DNA sequence (5'-RTCACRTG-3'), called CDEI, found in centromeres and in several promoters. DNA-binding activity is enhanced by MET28. Required as an auxiliary factor for transcriptional activation of sulfur metabolism together with MET4 and MET28. This is Centromere-binding protein 1 (CBF1) from Saccharomyces cerevisiae (strain ATCC 204508 / S288c) (Baker's yeast).